The chain runs to 159 residues: Phosphopantetheine adenylyltransferase (159 aa).

Thr8 contacts substrate. ATP is bound by residues 8–9 and His16; that span reads TF. The substrate site is built by Lys40, Thr72, and Arg86. Residues 87–89, Glu97, and 122–128 each bind ATP; these read GLR and YSFLSSS.

Belongs to the bacterial CoaD family. Homohexamer. Mg(2+) is required as a cofactor.

The protein resides in the cytoplasm. The enzyme catalyses (R)-4'-phosphopantetheine + ATP + H(+) = 3'-dephospho-CoA + diphosphate. It participates in cofactor biosynthesis; coenzyme A biosynthesis; CoA from (R)-pantothenate: step 4/5. In terms of biological role, reversibly transfers an adenylyl group from ATP to 4'-phosphopantetheine, yielding dephospho-CoA (dPCoA) and pyrophosphate. In Prochlorococcus marinus subsp. pastoris (strain CCMP1986 / NIES-2087 / MED4), this protein is Phosphopantetheine adenylyltransferase.